We begin with the raw amino-acid sequence, 302 residues long: NAD kinase 2 (302 aa).

Aspartate 79 functions as the Proton acceptor in the catalytic mechanism. NAD(+)-binding positions include 79-80, 153-154, aspartate 183, 194-199, alanine 218, and asparagine 252; these read DG, NE, and TAYSLS.

It belongs to the NAD kinase family. Requires a divalent metal cation as cofactor.

The protein resides in the cytoplasm. The enzyme catalyses NAD(+) + ATP = ADP + NADP(+) + H(+). In terms of biological role, involved in the regulation of the intracellular balance of NAD and NADP, and is a key enzyme in the biosynthesis of NADP. Catalyzes specifically the phosphorylation on 2'-hydroxyl of the adenosine moiety of NAD to yield NADP. In Prochlorococcus marinus subsp. pastoris (strain CCMP1986 / NIES-2087 / MED4), this protein is NAD kinase 2.